Here is a 555-residue protein sequence, read N- to C-terminus: CTP synthase (555 aa).

The segment at 1 to 267 (MPKFVFVTGG…CKEVLEFLDL (267 aa)) is amidoligase domain. Ser-13 provides a ligand contact to CTP. Ser-13 contacts UTP. ATP contacts are provided by residues 14–19 (SIGKGI) and Asp-71. Asp-71 and Glu-141 together coordinate Mg(2+). Residues 148–150 (DIE), 188–193 (KTKPTQ), and Lys-224 contribute to the CTP site. UTP contacts are provided by residues 188-193 (KTKPTQ) and Lys-224. Positions 292 to 534 (KVAVVGKYVQ…IAAAQSRLPR (243 aa)) constitute a Glutamine amidotransferase type-1 domain. Gly-354 is an L-glutamine binding site. Cys-381 serves as the catalytic Nucleophile; for glutamine hydrolysis. L-glutamine contacts are provided by residues 382–385 (LGMQ), Glu-405, and Arg-462. Residues His-507 and Glu-509 contribute to the active site. The interval 532–555 (LPRSPQEALKQTQINSPNQSKNNP) is disordered. Residues 540-555 (LKQTQINSPNQSKNNP) are compositionally biased toward polar residues.

Belongs to the CTP synthase family. In terms of assembly, homotetramer.

It catalyses the reaction UTP + L-glutamine + ATP + H2O = CTP + L-glutamate + ADP + phosphate + 2 H(+). The enzyme catalyses L-glutamine + H2O = L-glutamate + NH4(+). It carries out the reaction UTP + NH4(+) + ATP = CTP + ADP + phosphate + 2 H(+). The protein operates within pyrimidine metabolism; CTP biosynthesis via de novo pathway; CTP from UDP: step 2/2. With respect to regulation, allosterically activated by GTP, when glutamine is the substrate; GTP has no effect on the reaction when ammonia is the substrate. The allosteric effector GTP functions by stabilizing the protein conformation that binds the tetrahedral intermediate(s) formed during glutamine hydrolysis. Inhibited by the product CTP, via allosteric rather than competitive inhibition. Functionally, catalyzes the ATP-dependent amination of UTP to CTP with either L-glutamine or ammonia as the source of nitrogen. Regulates intracellular CTP levels through interactions with the four ribonucleotide triphosphates. This Prochlorococcus marinus (strain MIT 9211) protein is CTP synthase.